Here is a 726-residue protein sequence, read N- to C-terminus: Catalase-peroxidase (726 aa).

The disordered stretch occupies residues 1 to 33 (MSTTDDTHNTLSTGKCPFHQGGHDRSAGAGTAS). The segment at residues 105–226 (WHGAGTYRSI…LGATEMGLIY (122 aa)) is a cross-link (tryptophyl-tyrosyl-methioninium (Trp-Tyr) (with M-252)). Histidine 106 functions as the Proton acceptor in the catalytic mechanism. Positions 226–252 (YVNPEGPDHSGEPLSAAAAIRATFGNM) form a cross-link, tryptophyl-tyrosyl-methioninium (Tyr-Met) (with W-105). Histidine 267 lines the heme b pocket.

It belongs to the peroxidase family. Peroxidase/catalase subfamily. As to quaternary structure, homodimer or homotetramer. The cofactor is heme b. Post-translationally, formation of the three residue Trp-Tyr-Met cross-link is important for the catalase, but not the peroxidase activity of the enzyme.

The enzyme catalyses H2O2 + AH2 = A + 2 H2O. It carries out the reaction 2 H2O2 = O2 + 2 H2O. Its function is as follows. Bifunctional enzyme with both catalase and broad-spectrum peroxidase activity. This chain is Catalase-peroxidase, found in Salmonella typhi.